Consider the following 355-residue polypeptide: tRNA (guanine-N(1)-)-methyltransferase (355 aa).

Residues glycine 109 and 129 to 134 (IGDYVL) contribute to the S-adenosyl-L-methionine site.

It belongs to the RNA methyltransferase TrmD family. As to quaternary structure, homodimer.

Its subcellular location is the cytoplasm. It carries out the reaction guanosine(37) in tRNA + S-adenosyl-L-methionine = N(1)-methylguanosine(37) in tRNA + S-adenosyl-L-homocysteine + H(+). Functionally, specifically methylates guanosine-37 in various tRNAs. The protein is tRNA (guanine-N(1)-)-methyltransferase of Chlamydia caviae (strain ATCC VR-813 / DSM 19441 / 03DC25 / GPIC) (Chlamydophila caviae).